Reading from the N-terminus, the 159-residue chain is Cytochrome c-type biogenesis CcmH-like mitochondrial protein (159 aa).

Topologically, residues 1–82 (MEKTDEERKK…ETVLYAPKFD (82 aa)) are mitochondrial intermembrane. Positions 27 and 30 each coordinate heme. Residues 83–105 (LQTAALWLTPVIIAGGTAAGIVY) form a helical membrane-spanning segment. Topologically, residues 106–159 (QKHRLRKNVDIMALNLIRGVPLTPKERVTILDVLIPPSPPPQGVVSRLRRWLNR) are mitochondrial matrix.

It belongs to the CcmH/CycL/Ccl2/NrfF family. Interacts (via N-terminus) with CYTC-1. Interacts with CCMFN1 and CCMFN2.

Its subcellular location is the mitochondrion inner membrane. Plays a central role in mitochondrial cytochrome c maturation. Probable component of a heme lyase complex involved in the reduction of apocytochrome c. Forms a complex with CCMF proteins (CCMFC, CCMFN1 and CCMFN2) that performs the assembly of heme with c-type apocytochromes in mitochondria. The polypeptide is Cytochrome c-type biogenesis CcmH-like mitochondrial protein (Arabidopsis thaliana (Mouse-ear cress)).